Consider the following 398-residue polypeptide: MTLAAAAQLEKTPLETYVPPAKPSLIGLSRAELAERLGHIGVAPAQRKMRAQQLWNWMYLRGARDFSEMTNVSKEMRAQLSDHFTVDRPEVVAEQISNDGTRKWLLRLPSGDDVQKAHEVECVYIPETDRGTLCVSSQVGCTLNCSFCHTGTQRLVRNLTAGEIIGQVMVARDRLNDWVDRETPNGNRLVTNIVMMGMGEPLYNFEAVRDALLIVTDNEGIGISRRRVTLSTSGVVPNIIRTGEEIGVMLAISLHAVRDELRDELVPLNRKYPLKELLQACRDYPGASNARRITFEYVMLKGVNDSLDDARRLVQLLKGIPAKINLIPFNPWPGSAYECSDWDQIEKFSEYIFNAGYSSPVRTPRGRDILAACGQLKSETEKLSVRERDALRAMAMTD.

The active-site Proton acceptor is the Glu121. In terms of domain architecture, Radical SAM core spans 127 to 370; the sequence is ETDRGTLCVS…VRTPRGRDIL (244 aa). The cysteines at positions 134 and 373 are disulfide-linked. Cys141, Cys145, and Cys148 together coordinate [4Fe-4S] cluster. S-adenosyl-L-methionine is bound by residues 199 to 200, Ser231, 253 to 255, and Asn330; these read GE and SLH. Catalysis depends on Cys373, which acts as the S-methylcysteine intermediate.

Belongs to the radical SAM superfamily. RlmN family. [4Fe-4S] cluster serves as cofactor.

It localises to the cytoplasm. The enzyme catalyses adenosine(2503) in 23S rRNA + 2 reduced [2Fe-2S]-[ferredoxin] + 2 S-adenosyl-L-methionine = 2-methyladenosine(2503) in 23S rRNA + 5'-deoxyadenosine + L-methionine + 2 oxidized [2Fe-2S]-[ferredoxin] + S-adenosyl-L-homocysteine. It catalyses the reaction adenosine(37) in tRNA + 2 reduced [2Fe-2S]-[ferredoxin] + 2 S-adenosyl-L-methionine = 2-methyladenosine(37) in tRNA + 5'-deoxyadenosine + L-methionine + 2 oxidized [2Fe-2S]-[ferredoxin] + S-adenosyl-L-homocysteine. In terms of biological role, specifically methylates position 2 of adenine 2503 in 23S rRNA and position 2 of adenine 37 in tRNAs. m2A2503 modification seems to play a crucial role in the proofreading step occurring at the peptidyl transferase center and thus would serve to optimize ribosomal fidelity. This Rhodopseudomonas palustris (strain BisB5) protein is Dual-specificity RNA methyltransferase RlmN.